The primary structure comprises 102 residues: A-type ATP synthase subunit F (102 aa).

It belongs to the V-ATPase F subunit family. In terms of assembly, has multiple subunits with at least A(3), B(3), C, D, E, F, H, I and proteolipid K(x).

It localises to the cell membrane. Functionally, component of the A-type ATP synthase that produces ATP from ADP in the presence of a proton gradient across the membrane. This Thermococcus onnurineus (strain NA1) protein is A-type ATP synthase subunit F.